A 607-amino-acid polypeptide reads, in one-letter code: Chaperone protein DnaK (607 aa).

T174 is subject to Phosphothreonine; by autocatalysis. Residues 577–607 (GYTASGPQGGPNPGGGQSGPDGNVNTDYKVY) form a disordered region. Positions 583-595 (PQGGPNPGGGQSG) are enriched in gly residues.

It belongs to the heat shock protein 70 family.

Functionally, acts as a chaperone. This is Chaperone protein DnaK from Caldicellulosiruptor bescii (strain ATCC BAA-1888 / DSM 6725 / KCTC 15123 / Z-1320) (Anaerocellum thermophilum).